We begin with the raw amino-acid sequence, 365 residues long: Chloroplast protein FOR GROWTH AND FERTILITY 1 (365 aa).

Disordered stretches follow at residues 1–30 (MERL…LPRL) and 62–90 (YTPI…PGFL). Residues 1-79 (MERLLQPSSS…TNNSFNGSPK (79 aa)) constitute a chloroplast transit peptide. Low complexity-rich tracts occupy residues 7 to 24 (PSSS…SRTS) and 62 to 77 (YTPI…FNGS). 7 consecutive transmembrane segments (helical) span residues 109–129 (VILI…PPAF), 139–159 (GWLT…LSGP), 182–202 (ALWG…FLLL), 218–238 (IVGL…SEIP), 274–294 (GVVH…LALP), 301–321 (AFLI…TAFI), and 345–365 (LVAI…FSLY).

Mostly expressed in leaves and flowers, to a lower extent, in stems, roots, floral bud, inflorescence and siliques, and, barely, in seedlings.

The protein localises to the plastid. Its subcellular location is the chloroplast membrane. It is found in the plastid membrane. Together with CGF2, essential protein which supports female gametogenesis and embryogenesis, probably by securing local energy supply. The sequence is that of Chloroplast protein FOR GROWTH AND FERTILITY 1 from Arabidopsis thaliana (Mouse-ear cress).